Consider the following 261-residue polypeptide: Hydroxyethylthiazole kinase (261 aa).

Residue Met40 coordinates substrate. ATP contacts are provided by Lys116 and Thr162. Position 189 (Gly189) interacts with substrate.

The protein belongs to the Thz kinase family. Mg(2+) is required as a cofactor.

It carries out the reaction 5-(2-hydroxyethyl)-4-methylthiazole + ATP = 4-methyl-5-(2-phosphooxyethyl)-thiazole + ADP + H(+). It participates in cofactor biosynthesis; thiamine diphosphate biosynthesis; 4-methyl-5-(2-phosphoethyl)-thiazole from 5-(2-hydroxyethyl)-4-methylthiazole: step 1/1. Catalyzes the phosphorylation of the hydroxyl group of 4-methyl-5-beta-hydroxyethylthiazole (THZ). The protein is Hydroxyethylthiazole kinase of Methanosarcina acetivorans (strain ATCC 35395 / DSM 2834 / JCM 12185 / C2A).